A 200-amino-acid polypeptide reads, in one-letter code: Lipopolysaccharide core heptose(II)-phosphate phosphatase (200 aa).

An N-terminal signal peptide occupies residues 1-25; sequence MLAFCRSSLKSKKYFIILLALAAIA.

Belongs to the phosphoglycerate mutase family. Ais subfamily.

The protein localises to the periplasm. It functions in the pathway bacterial outer membrane biogenesis; lipopolysaccharide metabolism. Catalyzes the dephosphorylation of heptose(II) of the outer membrane lipopolysaccharide core. This chain is Lipopolysaccharide core heptose(II)-phosphate phosphatase, found in Shigella flexneri serotype 5b (strain 8401).